The primary structure comprises 269 residues: Hydroxyethylthiazole kinase (269 aa).

M43 lines the substrate pocket. 2 residues coordinate ATP: R119 and S165. Position 192 (A192) interacts with substrate.

The protein belongs to the Thz kinase family. The cofactor is Mg(2+).

It catalyses the reaction 5-(2-hydroxyethyl)-4-methylthiazole + ATP = 4-methyl-5-(2-phosphooxyethyl)-thiazole + ADP + H(+). Its pathway is cofactor biosynthesis; thiamine diphosphate biosynthesis; 4-methyl-5-(2-phosphoethyl)-thiazole from 5-(2-hydroxyethyl)-4-methylthiazole: step 1/1. Its function is as follows. Catalyzes the phosphorylation of the hydroxyl group of 4-methyl-5-beta-hydroxyethylthiazole (THZ). In Glaesserella parasuis serovar 5 (strain SH0165) (Haemophilus parasuis), this protein is Hydroxyethylthiazole kinase.